The primary structure comprises 627 residues: MACPF domain-containing protein At1g14780 (627 aa).

The region spanning 1–339 (MSRDGGDVIE…PPLMDLQYFL (339 aa)) is the MACPF domain.

It belongs to the complement C6/C7/C8/C9 (TC 1.C.39) family.

Functionally, negatively controls the salicylic acid (SA)-mediated pathway of programmed cell death in plant immunity. In Arabidopsis thaliana (Mouse-ear cress), this protein is MACPF domain-containing protein At1g14780.